Consider the following 81-residue polypeptide: ATP synthase subunit c (81 aa).

Helical transmembrane passes span 7–27 (AASV…PGIG) and 57–77 (LAFM…LLFA).

The protein belongs to the ATPase C chain family. As to quaternary structure, F-type ATPases have 2 components, F(1) - the catalytic core - and F(0) - the membrane proton channel. F(1) has five subunits: alpha(3), beta(3), gamma(1), delta(1), epsilon(1). F(0) has four main subunits: a(1), b(1), b'(1) and c(10-14). The alpha and beta chains form an alternating ring which encloses part of the gamma chain. F(1) is attached to F(0) by a central stalk formed by the gamma and epsilon chains, while a peripheral stalk is formed by the delta, b and b' chains.

The protein localises to the cellular thylakoid membrane. Its function is as follows. F(1)F(0) ATP synthase produces ATP from ADP in the presence of a proton or sodium gradient. F-type ATPases consist of two structural domains, F(1) containing the extramembraneous catalytic core and F(0) containing the membrane proton channel, linked together by a central stalk and a peripheral stalk. During catalysis, ATP synthesis in the catalytic domain of F(1) is coupled via a rotary mechanism of the central stalk subunits to proton translocation. Key component of the F(0) channel; it plays a direct role in translocation across the membrane. A homomeric c-ring of between 10-14 subunits forms the central stalk rotor element with the F(1) delta and epsilon subunits. The sequence is that of ATP synthase subunit c from Synechococcus elongatus (strain ATCC 33912 / PCC 7942 / FACHB-805) (Anacystis nidulans R2).